The following is a 600-amino-acid chain: ATP-dependent lipid A-core flippase (600 aa).

4 consecutive transmembrane segments (helical) span residues 26-46 (VGIF…QPML), 82-102 (LLIV…NYFL), 167-187 (VFLF…MLAI), and 266-286 (PMLQ…VLFL). The 292-residue stretch at 30–321 (LLSILGFVIF…LSEVSSTIQK (292 aa)) folds into the ABC transmembrane type-1 domain. One can recognise an ABC transporter domain in the interval 353–589 (LEVKNLSFFY…NGYYARLHAM (237 aa)). Residue 387–394 (GRSGSGKS) coordinates ATP.

It belongs to the ABC transporter superfamily. Lipid exporter (TC 3.A.1.106) family. As to quaternary structure, homodimer.

It is found in the cell inner membrane. It carries out the reaction ATP + H2O + lipid A-core oligosaccharideSide 1 = ADP + phosphate + lipid A-core oligosaccharideSide 2.. In terms of biological role, involved in lipopolysaccharide (LPS) biosynthesis. Translocates lipid A-core from the inner to the outer leaflet of the inner membrane. Transmembrane domains (TMD) form a pore in the inner membrane and the ATP-binding domain (NBD) is responsible for energy generation. The polypeptide is ATP-dependent lipid A-core flippase (Pseudomonas syringae pv. tomato (strain ATCC BAA-871 / DC3000)).